The primary structure comprises 408 residues: uncharacterized protein (408 aa).

2 disordered regions span residues 218–265 (EPTA…TSER) and 367–408 (MESE…ETPN). Residues 369 to 379 (SEVINSSSSTS) show a composition bias toward low complexity. A compositionally biased stretch (acidic residues) spans 394–408 (IVEEVPETAENETPN).

The protein to C.elegans C05E11.1.

This is an uncharacterized protein from Arabidopsis thaliana (Mouse-ear cress).